The sequence spans 270 residues: Small ribosomal subunit protein bS1m (270 aa).

The disordered stretch occupies residues 218-250 (TKQGFKHLGPKPLAYTEKKRETTKQSTKNNVFQ).

The protein belongs to the bacterial ribosomal protein bS1 family.

Its subcellular location is the mitochondrion. This chain is Small ribosomal subunit protein bS1m (RPS1), found in Marchantia polymorpha (Common liverwort).